Reading from the N-terminus, the 185-residue chain is Adenine phosphoribosyltransferase (185 aa).

This sequence belongs to the purine/pyrimidine phosphoribosyltransferase family. Homodimer.

It localises to the cytoplasm. It catalyses the reaction AMP + diphosphate = 5-phospho-alpha-D-ribose 1-diphosphate + adenine. It participates in purine metabolism; AMP biosynthesis via salvage pathway; AMP from adenine: step 1/1. Functionally, catalyzes a salvage reaction resulting in the formation of AMP, that is energically less costly than de novo synthesis. This is Adenine phosphoribosyltransferase from Shewanella denitrificans (strain OS217 / ATCC BAA-1090 / DSM 15013).